The sequence spans 299 residues: MHGFLNINKPQAMTSFDVIKKLKKVLPRKYKLGHLGTLDPMAEGVLPVAVGCGTRIIPFVEDETKEYIATMTLGASSDTQDAWGVITYHTPRKIEPAQVEKVLALFRGKSRQVPPMYSAVHHEGKRLYELARQGLEVERKAREIEIFELELLNADWEQELPQLSLRVSCSRGTYIRTLCHDIGQELGCGAYLSSLRRSRSGCFKIEEAVSLDYIIEKRENLSRALLPLDYPINNLPLISLKSAELPAIINGRQISRTGKLASPRVRLYTPEGQLLAIAEANNYNEDTVLQPCRVFKINE.

D39 functions as the Nucleophile in the catalytic mechanism.

Belongs to the pseudouridine synthase TruB family. Type 1 subfamily.

The enzyme catalyses uridine(55) in tRNA = pseudouridine(55) in tRNA. Responsible for synthesis of pseudouridine from uracil-55 in the psi GC loop of transfer RNAs. The polypeptide is tRNA pseudouridine synthase B (Syntrophomonas wolfei subsp. wolfei (strain DSM 2245B / Goettingen)).